The sequence spans 380 residues: Nucleoporin Nup43 (380 aa).

Position 1 is an N-acetylmethionine (M1). WD repeat units lie at residues F8–S57, R72–S110, H119–T166, A170–C208, G215–S255, and A259–S299.

As to quaternary structure, component of the Nup107-160 subcomplex of the nuclear pore complex (NPC). The Nup107-160 subcomplex includes NUP160, NUP133, NUP107, NUP98, NUP85, NUP43, NUP37, SEH1 and SEC13.

The protein localises to the chromosome. Its subcellular location is the centromere. The protein resides in the kinetochore. It is found in the nucleus. It localises to the nuclear pore complex. Functionally, component of the Nup107-160 subcomplex of the nuclear pore complex (NPC). The Nup107-160 subcomplex is required for the assembly of a functional NPC. The Nup107-160 subcomplex is also required for normal kinetochore microtubule attachment, mitotic progression and chromosome segregation. The sequence is that of Nucleoporin Nup43 (Nup43) from Mus musculus (Mouse).